The primary structure comprises 568 residues: Glucose-6-phosphate isomerase, cytosolic 1 (568 aa).

Catalysis depends on glutamate 360, which acts as the Proton donor. Residues histidine 391 and lysine 516 contribute to the active site.

Belongs to the GPI family. In terms of assembly, homodimer.

The protein resides in the cytoplasm. It carries out the reaction alpha-D-glucose 6-phosphate = beta-D-fructose 6-phosphate. It participates in carbohydrate degradation; glycolysis; D-glyceraldehyde 3-phosphate and glycerone phosphate from D-glucose: step 2/4. The polypeptide is Glucose-6-phosphate isomerase, cytosolic 1 (PGIC1) (Clarkia arcuata (Glandular clarkia)).